A 1228-amino-acid polypeptide reads, in one-letter code: Serine/threonine-protein kinase CST20 (1228 aa).

The segment covering 1–18 (MSILSENNPTQTSITDPN) has biased composition (polar residues). Disordered regions lie at residues 1–382 (MSIL…TAHN) and 405–468 (NSTN…HSQE). 2 stretches are compositionally biased toward low complexity: residues 57 to 70 (NTTSANTSSLSLGS) and 95 to 123 (ESGSSDIDDSQQSHNNNNNNNNNESNPES). The span at 148 to 159 (HQGDDSDNEKQY) shows a compositional bias: basic and acidic residues. 3 stretches are compositionally biased toward polar residues: residues 173–195 (DSYSPGTLESPGTLNALETNNVS), 205–222 (TSSLEDLSLSLQHQNENA), and 232–244 (PQVSTSKTSSFHD). Residues 246-255 (SSVISSSTSV) show a composition bias toward low complexity. Polar residues-rich tracts occupy residues 260–275 (SNPTSTRGSHLSSYKS) and 309–328 (DTLSSATNSPNLLRNDTLQG). Residues 347 to 367 (NTSATSRNTSGTSTSTVVKNS) are compositionally biased toward low complexity. The segment covering 368–382 (RSGTSKLTSTSTAHN) has biased composition (polar residues). The segment covering 437-466 (KVRGVFSSMFGKNKSTSSSSSSNSGSNSHS) has biased composition (low complexity). One can recognise a CRIB domain in the interval 473-486 (ISTPFNAKHLAHVG). Disordered stretches follow at residues 543–829 (FHFD…ALAD) and 865–917 (LREK…KQAA). A compositionally biased stretch (polar residues) spans 548 to 559 (NKSSSSGWSNEN). The segment covering 568 to 579 (SNSGSGGGGGGA) has biased composition (gly residues). The segment covering 602–611 (ITPSQSMPTK) has biased composition (polar residues). Positions 612–626 (TESKQSENQHPHEDN) are enriched in basic and acidic residues. Positions 627-640 (ATQYTPRTPTSHVQ) are enriched in polar residues. Low complexity-rich tracts occupy residues 668–681 (PSSQSLPRSDSQSD), 693–708 (ISPSKIKIRSISSKSL), and 734–747 (SIPKSKSHSASLSS). Residues 748–759 (QLRPATNGSTTA) are compositionally biased toward polar residues. The span at 787-805 (APPPPPSASPAPPVPPAPP) shows a compositional bias: pro residues. A compositionally biased stretch (polar residues) spans 809–824 (LSEQTSEIPQQRTAPS). The span at 865–874 (LREKNERQNR) shows a compositional bias: basic and acidic residues. Residues 875–890 (QQETGQNNADTASGGS) are compositionally biased toward polar residues. Positions 951–1203 (YVDLVKIGQG…ADELLHDNFI (253 aa)) constitute a Protein kinase domain. ATP-binding positions include 957–965 (IGQGASGGV) and Lys981. The active-site Proton acceptor is the Asp1071.

Belongs to the protein kinase superfamily. STE Ser/Thr protein kinase family. STE20 subfamily.

Its subcellular location is the cytoplasm. The protein resides in the nucleus. It catalyses the reaction L-seryl-[protein] + ATP = O-phospho-L-seryl-[protein] + ADP + H(+). The catalysed reaction is L-threonyl-[protein] + ATP = O-phospho-L-threonyl-[protein] + ADP + H(+). Functionally, MAP4K component of the MAPK pathway required for the mating pheromone response, and the regulation of cell polarity and cell cycle. Phosphorylates histone H2B to form H2BS10ph. Required for hyphal formation and virulence. The chain is Serine/threonine-protein kinase CST20 (CST20) from Candida albicans (strain SC5314 / ATCC MYA-2876) (Yeast).